Here is a 206-residue protein sequence, read N- to C-terminus: Protein GrpE (206 aa).

Polar residues predominate over residues 1-15 (MTDSNGQKDNNQDQA). Residues 1–38 (MTDSNGQKDNNQDQAQPADPVVSKPYIMPDDPEEGTNE) form a disordered region.

It belongs to the GrpE family. Homodimer.

It is found in the cytoplasm. Participates actively in the response to hyperosmotic and heat shock by preventing the aggregation of stress-denatured proteins, in association with DnaK and GrpE. It is the nucleotide exchange factor for DnaK and may function as a thermosensor. Unfolded proteins bind initially to DnaJ; upon interaction with the DnaJ-bound protein, DnaK hydrolyzes its bound ATP, resulting in the formation of a stable complex. GrpE releases ADP from DnaK; ATP binding to DnaK triggers the release of the substrate protein, thus completing the reaction cycle. Several rounds of ATP-dependent interactions between DnaJ, DnaK and GrpE are required for fully efficient folding. This is Protein GrpE from Rhodopseudomonas palustris (strain BisB5).